We begin with the raw amino-acid sequence, 1076 residues long: MESSIFKPSSMDLIRAGLQDLDKARALFDQLKADDIPDERCAELLSALAHACDPDMALSNFVDIVNAMQSSQRDLEHVIPDNDALKRLVTVLGVSDAMGKFMRFKPQLVEAAAVDNCNSHLFNHAQRRARLLKAVGADPDEPAMPVASKDLAEAATALRSSYRNQLAAIIAQDAVADDPTSIQPTISRELSDLADAALEGALAIARHETEGSEHVRFTIIGMGKLGAQELNYVSDVDLIYVVEPADKDVDHQTLIRVGTKMGTMLQRVCQSAIMGVAEQPLWQIDGGLRPEGKDGALVRVLSSHKNYYEQWAENWEFQALLKARPVAGDPDLGQAYMDMTRPFVWSASKRKNFVYDCQKMRKRVEDLIPAPLKDREIKLGRGGLRDVEFTVQMLQLVHGRTDESLRTSNTLDSLQRLSEGGYVSRKQAVRMSQDYRFERVMEHRQQIWSLKRTHLFPDLGRASVGGLEKKRDIDVDELNQNQELRRLARAFGLHPEELVDKYDDTRREVRHLHLDIYYRPMLPVNAQMENDQIVLSVEAAQERFESIGFGDPDAAIRHVQALTAGVGRAAKINRIILPAVLQWLGEGQNPDMGLLNWRKLEENFGTESGYLGFLRDSTSAAQRLCHILSNSRFLGDALNKSVESISWLGDDDNLQARTREALDVQTGSALERFGSNINEFATSMRAMRRHEIERIGLSWMSGVISDSDSLKAMTDVYDAIIDASLTWAVRHQIAEFGVETAPAGITVIAMGRYGGREVNFSSDADAILIYRPADDADDGQANAFAKKVVEDLRNILQGPTTLEPKIELDLDLRPEGKNGPLVRSYASCEEYYESWASTWERQALLRARYAAGDAELARDFLINIADPLRYPTTELTEAELQNIRKLKARMEAERLPRGVRRERHLKLGKGGLSDVEWTVQLMQLQHAGDIKDLRVNGTLEALDVLEAKKLISAIDAIQLRKAWTLCTAARNGSYLWSGRANQADILPDDIYSLGGIAVYLGYGAHRGQHFENDLLAVMRKCRDVCQRLFYGKTEGEAAAATTATASAATQQPQTAPRPRMHVIAPRLERNRRRAQR.

The tract at residues 1–521 (MESSIFKPSS…LHLDIYYRPM (521 aa)) is adenylyl removase. Residues 524–1076 (VNAQMENDQI…LERNRRRAQR (553 aa)) form an adenylyl transferase region. The segment covering 1042 to 1056 (TATASAATQQPQTAP) has biased composition (low complexity). Residues 1042–1076 (TATASAATQQPQTAPRPRMHVIAPRLERNRRRAQR) form a disordered region.

This sequence belongs to the GlnE family. Mg(2+) is required as a cofactor.

It carries out the reaction [glutamine synthetase]-O(4)-(5'-adenylyl)-L-tyrosine + phosphate = [glutamine synthetase]-L-tyrosine + ADP. The enzyme catalyses [glutamine synthetase]-L-tyrosine + ATP = [glutamine synthetase]-O(4)-(5'-adenylyl)-L-tyrosine + diphosphate. Involved in the regulation of glutamine synthetase GlnA, a key enzyme in the process to assimilate ammonia. When cellular nitrogen levels are high, the C-terminal adenylyl transferase (AT) inactivates GlnA by covalent transfer of an adenylyl group from ATP to specific tyrosine residue of GlnA, thus reducing its activity. Conversely, when nitrogen levels are low, the N-terminal adenylyl removase (AR) activates GlnA by removing the adenylyl group by phosphorolysis, increasing its activity. The regulatory region of GlnE binds the signal transduction protein PII (GlnB) which indicates the nitrogen status of the cell. This Bifidobacterium longum (strain DJO10A) protein is Bifunctional glutamine synthetase adenylyltransferase/adenylyl-removing enzyme.